Consider the following 279-residue polypeptide: MNYQDNSLKSLKLGQKTEYASQYDRTLLQPVPRALNRDGLGITQNQPFTIGADIWTAYEISWLNEKGLPQVAIADIYLDYQSQNLIESKSFKLYLNSFNQSKFADFNAVQQTMQRDLSECAQGDVKVRLNPMAVYDSQKIDHLQGDCIDEQDIEITSYEFNANWLKDCVSDEIVEEKLVSHLLKSNCLITNQPDWGTLHIHYVGKKINQEKLLRYVVSFRQHNEFHEQCVERIFCDLMHYAKPEKLTVYARYTRRGGLDINPFRSNFENLPENLRLARQ.

86 to 88 (IES) provides a ligand contact to substrate. 88–89 (SK) is an NADPH binding site. Cys-187 (thioimide intermediate) is an active-site residue. Asp-194 functions as the Proton donor in the catalytic mechanism. 226–227 (HE) is a binding site for substrate. 255–256 (RG) lines the NADPH pocket.

This sequence belongs to the GTP cyclohydrolase I family. QueF type 2 subfamily. In terms of assembly, homodimer.

The protein resides in the cytoplasm. The enzyme catalyses 7-aminomethyl-7-carbaguanine + 2 NADP(+) = 7-cyano-7-deazaguanine + 2 NADPH + 3 H(+). Its pathway is tRNA modification; tRNA-queuosine biosynthesis. In terms of biological role, catalyzes the NADPH-dependent reduction of 7-cyano-7-deazaguanine (preQ0) to 7-aminomethyl-7-deazaguanine (preQ1). The sequence is that of NADPH-dependent 7-cyano-7-deazaguanine reductase from Haemophilus influenzae (strain ATCC 51907 / DSM 11121 / KW20 / Rd).